The chain runs to 312 residues: Olfactory receptor 1J21 (312 aa).

7 consecutive transmembrane segments (helical) span residues 29-49 (ALFL…ILLI), 58-78 (PMYF…SVTA), 95-115 (AGCV…NFLL), 143-163 (LLVM…TLLF), 197-217 (LVIL…ILVS), 241-261 (CGSH…LYFF), and 272-292 (VIVA…IYSL).

The protein belongs to the G-protein coupled receptor 1 family.

It is found in the cell membrane. Functionally, odorant receptor. Activated by (+) and (-)-carvone. This Mus musculus (Mouse) protein is Olfactory receptor 1J21.